The primary structure comprises 295 residues: MNFGKVLTAMVTPFDKHEEIDFQALDHLIDHLINNGSDGLVVAGTTGESPTLTHEERIKLFEYVVKKVNGAVPVIAGTGSNYTKASIELTKEVAKTGVDGVMLVAPYYNKPSQDSMYEHFKVIAESTELPVMLYNVPGRTGVDMDVSTVVRLSQIDNIVSIKDASGNLEKMTNIIRLTDDNFSVYSGEDSLTLPALAIGADGIVSVSSHIIGNDMQEMIQRFEQGQVAEAANIHQRVLPVMQEMFANPSPVPVKTALNLQSVPVGKVRLPLIELTDEQLQNLQSVLSDFEHSKMI.

T46 provides a ligand contact to pyruvate. Y134 serves as the catalytic Proton donor/acceptor. The Schiff-base intermediate with substrate role is filled by K162. Residue V204 coordinates pyruvate.

This sequence belongs to the DapA family. In terms of assembly, homotetramer; dimer of dimers.

The protein localises to the cytoplasm. It carries out the reaction L-aspartate 4-semialdehyde + pyruvate = (2S,4S)-4-hydroxy-2,3,4,5-tetrahydrodipicolinate + H2O + H(+). The protein operates within amino-acid biosynthesis; L-lysine biosynthesis via DAP pathway; (S)-tetrahydrodipicolinate from L-aspartate: step 3/4. Functionally, catalyzes the condensation of (S)-aspartate-beta-semialdehyde [(S)-ASA] and pyruvate to 4-hydroxy-tetrahydrodipicolinate (HTPA). The polypeptide is 4-hydroxy-tetrahydrodipicolinate synthase (Oceanobacillus iheyensis (strain DSM 14371 / CIP 107618 / JCM 11309 / KCTC 3954 / HTE831)).